We begin with the raw amino-acid sequence, 445 residues long: Proline--tRNA ligase (445 aa).

This sequence belongs to the class-II aminoacyl-tRNA synthetase family. ProS type 2 subfamily. As to quaternary structure, homodimer.

Its subcellular location is the cytoplasm. It carries out the reaction tRNA(Pro) + L-proline + ATP = L-prolyl-tRNA(Pro) + AMP + diphosphate. Its function is as follows. Catalyzes the attachment of proline to tRNA(Pro) in a two-step reaction: proline is first activated by ATP to form Pro-AMP and then transferred to the acceptor end of tRNA(Pro). This chain is Proline--tRNA ligase, found in Cereibacter sphaeroides (strain ATCC 17025 / ATH 2.4.3) (Rhodobacter sphaeroides).